A 451-amino-acid polypeptide reads, in one-letter code: tRNA-2-methylthio-N(6)-dimethylallyladenosine synthase (451 aa).

The MTTase N-terminal domain occupies 6–122 (RHYHITTFGC…LQDLLEQVFN (117 aa)). 6 residues coordinate [4Fe-4S] cluster: C15, C51, C85, C157, C161, and C164. The Radical SAM core domain occupies 143 to 380 (RDSKITAWVN…NHLVGVKAAD (238 aa)). Residues 383–447 (QRYMGRIEEV…PFSLTGEVKE (65 aa)) enclose the TRAM domain.

Belongs to the methylthiotransferase family. MiaB subfamily. Monomer. Requires [4Fe-4S] cluster as cofactor.

It is found in the cytoplasm. The catalysed reaction is N(6)-dimethylallyladenosine(37) in tRNA + (sulfur carrier)-SH + AH2 + 2 S-adenosyl-L-methionine = 2-methylsulfanyl-N(6)-dimethylallyladenosine(37) in tRNA + (sulfur carrier)-H + 5'-deoxyadenosine + L-methionine + A + S-adenosyl-L-homocysteine + 2 H(+). Catalyzes the methylthiolation of N6-(dimethylallyl)adenosine (i(6)A), leading to the formation of 2-methylthio-N6-(dimethylallyl)adenosine (ms(2)i(6)A) at position 37 in tRNAs that read codons beginning with uridine. The polypeptide is tRNA-2-methylthio-N(6)-dimethylallyladenosine synthase (Trichodesmium erythraeum (strain IMS101)).